Reading from the N-terminus, the 419-residue chain is Arginine biosynthesis bifunctional protein ArgJ 1, mitochondrial (419 aa).

Residues Lys-177, Thr-188, Glu-275, Asn-414, and Thr-419 each contribute to the substrate site. Thr-188 (nucleophile) is an active-site residue.

Belongs to the ArgJ family. Heterodimer of an alpha and a beta chain. The alpha and beta chains are autoproteolytically processed from a single precursor protein within the mitochondrion.

The protein resides in the mitochondrion matrix. It catalyses the reaction N(2)-acetyl-L-ornithine + L-glutamate = N-acetyl-L-glutamate + L-ornithine. It carries out the reaction L-glutamate + acetyl-CoA = N-acetyl-L-glutamate + CoA + H(+). Its pathway is amino-acid biosynthesis; L-arginine biosynthesis; L-ornithine and N-acetyl-L-glutamate from L-glutamate and N(2)-acetyl-L-ornithine (cyclic): step 1/1. The protein operates within amino-acid biosynthesis; L-arginine biosynthesis; N(2)-acetyl-L-ornithine from L-glutamate: step 1/4. Catalyzes two activities which are involved in the cyclic version of arginine biosynthesis: the synthesis of acetylglutamate from glutamate and acetyl-CoA, and of ornithine by transacetylation between acetylornithine and glutamate. This chain is Arginine biosynthesis bifunctional protein ArgJ 1, mitochondrial, found in Sclerotinia sclerotiorum (strain ATCC 18683 / 1980 / Ss-1) (White mold).